The chain runs to 730 residues: Acetylene hydratase (730 aa).

Cys9 and Cys12 together coordinate [4Fe-4S] cluster. Residue Asp13 is part of the active site. Cys16 and Cys46 together coordinate [4Fe-4S] cluster. Residues Lys48, 111–114 (TEIN), Cys141, 172–173 (KN), 177–179 (HNW), 199–202 (LDPR), 218–221 (YGTD), Ser296, Gln300, 416–418 (ASN), 422–423 (GY), 442–444 (YDQ), Asp460, Arg465, 602–613 (FAGLREDSNFQS), Arg606, His676, Asp699, and Arg720 contribute to the W-bis(molybdopterin guanine dinucleotide) site.

Belongs to the prokaryotic molybdopterin-containing oxidoreductase family. Monomer. [4Fe-4S] cluster is required as a cofactor. W-bis(molybdopterin guanine dinucleotide) serves as cofactor.

It catalyses the reaction acetaldehyde = acetylene + H2O. In terms of biological role, catalyzes the hydration of acetylene to form acetaldehyde. Ethylene cannot act as a substrate. The sequence is that of Acetylene hydratase from Syntrophotalea acetylenica (Pelobacter acetylenicus).